A 322-amino-acid polypeptide reads, in one-letter code: Peptidase 1 (322 aa).

A signal peptide spans 1–18; it reads MKFVLAIASLLVLSVVYA. Positions 19–99 are excised as a propeptide; that stretch reads YPSEIRTFEE…LKKEFDLDAG (81 aa). An intrachain disulfide couples Cys-131 to Cys-171. Cys-134 is an active-site residue. The N-linked (GlcNAc...) asparagine glycan is linked to Asn-152. Residues His-270 and Asn-290 contribute to the active site.

It belongs to the peptidase C1 family. As to expression, expressed in the gut.

It is found in the secreted. It catalyses the reaction Broad endopeptidase specificity.. Its function is as follows. Probable thiol protease. The protein is Peptidase 1 of Psoroptes ovis (Sheep scab mite).